Here is a 792-residue protein sequence, read N- to C-terminus: Pentatricopeptide repeat-containing protein At4g30700 (792 aa).

PPR repeat units lie at residues 51-81, 82-117, 118-152, 153-183, 184-218, 220-254, 255-285, 286-320, 321-352, 353-383, 384-418, 419-453, 454-484, 485-519, 520-555, and 556-586; these read DISL…VQRP, DVFL…DLKP, NSST…GCDS, ELLL…MPEK, DTIL…SCTR, DTTT…GCYS, HDYV…FRKP, DIVA…GARL, RSST…NFLS, HASV…SPEK, SLPS…EFSP, NPVT…DFES, SIYV…MTKK, NEVT…GITP, TPVT…GFEP, and SVKH…MSIE. Positions 591-666 are type E motif; the sequence is VWETLLGACR…APGYTLIEIG (76 aa). A type E(+) motif region spans residues 667–697; it reads ETPHVFTSGDQSHPQVKEIYEKLEKLEGKMR. A type DYW motif region spans residues 698-792; that stretch reads EAGYQPETEL…DGVCSCGDYW (95 aa).

Belongs to the PPR family. PCMP-H subfamily.

This chain is Pentatricopeptide repeat-containing protein At4g30700 (DYW9), found in Arabidopsis thaliana (Mouse-ear cress).